Consider the following 508-residue polypeptide: WD repeat-containing protein JIP5 (508 aa).

WD repeat units lie at residues 46-94 (LATG…GVET), 105-144 (RHKGSVRCICFDADGTHIYSVGTDNVLKKADTLTGKVVKK), 150-189 (GQNVKYTKLVKSATHPLVLLGDENGNVTVLNSESLEQTNL), 194-234 (HNGD…EGDF), 252-293 (DQED…LADQ), and 344-381 (SKLDEVTFLDLDSEYRLLSGGLDKAKLWDSEKSEQLTP). The interval 372 to 508 (DSEKSEQLTP…THGIRRFEGL (137 aa)) is disordered. Basic and acidic residues predominate over residues 491-508 (IKPERSMKTHGIRRFEGL).

The protein belongs to the WD repeat WDR55 family.

It localises to the nucleus. The protein localises to the nucleolus. The chain is WD repeat-containing protein JIP5 (JIP5) from Eremothecium gossypii (strain ATCC 10895 / CBS 109.51 / FGSC 9923 / NRRL Y-1056) (Yeast).